Consider the following 172-residue polypeptide: 3-hydroxydecanoyl-[acyl-carrier-protein] dehydratase (172 aa).

H71 is a catalytic residue.

Belongs to the thioester dehydratase family. FabA subfamily. In terms of assembly, homodimer.

Its subcellular location is the cytoplasm. It catalyses the reaction a (3R)-hydroxyacyl-[ACP] = a (2E)-enoyl-[ACP] + H2O. The catalysed reaction is (3R)-hydroxydecanoyl-[ACP] = (2E)-decenoyl-[ACP] + H2O. It carries out the reaction (2E)-decenoyl-[ACP] = (3Z)-decenoyl-[ACP]. It functions in the pathway lipid metabolism; fatty acid biosynthesis. Functionally, necessary for the introduction of cis unsaturation into fatty acids. Catalyzes the dehydration of (3R)-3-hydroxydecanoyl-ACP to E-(2)-decenoyl-ACP and then its isomerization to Z-(3)-decenoyl-ACP. Can catalyze the dehydratase reaction for beta-hydroxyacyl-ACPs with saturated chain lengths up to 16:0, being most active on intermediate chain length. The sequence is that of 3-hydroxydecanoyl-[acyl-carrier-protein] dehydratase from Pectobacterium atrosepticum (strain SCRI 1043 / ATCC BAA-672) (Erwinia carotovora subsp. atroseptica).